The sequence spans 585 residues: Pre-hexon-linking protein IIIa (585 aa).

The interval 1 to 24 (MMQDATDPAVRAALQSQPSGLNST) is disordered. The interval 1 to 106 (MMQDATDPAV…ALLQRVARYN (106 aa)) is peripentonal hexon-tethering domain. A compositionally biased stretch (polar residues) spans 14-24 (LQSQPSGLNST). The binding to hexon-linking protein stretch occupies residues 138 to 251 (GSMVALNAFL…FTDSGSVSRD (114 aa)). Phosphoserine; by host is present on Ser-225. Thr-274 carries the phosphothreonine; by host modification. Residues Ser-310, Ser-444, Ser-449, Ser-450, Ser-452, Ser-469, and Ser-473 each carry the phosphoserine; by host modification. A disordered region spans residues 438–475 (AALRKESFRRPSSLSDLGAAAPRSDASSPFPSLIGSFT). Polar residues predominate over residues 462-475 (DASSPFPSLIGSFT). Tyr-490 is modified (phosphotyrosine; by host). Ser-494 and Ser-515 each carry phosphoserine; by host. A disordered region spans residues 528–573 (QEHRDVPGPRPPTRRQRHDRQRGLVWEDDDSADDSSVLDLGGSGNP). Positions 571–585 (GNPFAHLRPRLGRMF) are excised as a propeptide.

It belongs to the adenoviridae hexon-linking protein IIIa family. In terms of assembly, interacts with hexon proteins; this interaction tethers the peripentonal hexons to hexons situated in the facet. Interacts with the penton protein (via N-terminus). Interacts with packaging protein 3; this interaction is required to promote correct genome packaging. In terms of processing, cleaved near the C-terminus by the viral protease during virion maturation to form the mature protein.

The protein localises to the virion. It localises to the host nucleus. Its function is as follows. Structural component of the virion that acts as a cement protein on the capsid exterior which mediates the interactions between the hexons, including the peripentonal hexons, and reaches all the way to the penton vertices. Two hexon linking proteins IIIa, one from each facet, stabilize the unique edge interface between a pair of facets. As the virus enters the host cell, hexon linking proteins IIIa are shed concomitant with virion acidification in the endosome. During virus assembly, seems to play a role in the serotype specificity of the packaging of viral DNA via its interaction with packaging protein 3. This is Pre-hexon-linking protein IIIa from Human adenovirus C serotype 2 (HAdV-2).